A 516-amino-acid chain; its full sequence is Alstonine synthase (516 aa).

Residues 6 to 26 form a helical membrane-spanning segment; that stretch reads NFSLTSPIFLLLSSLFLIILL. Residue cysteine 453 coordinates heme.

Belongs to the cytochrome P450 family. Heme is required as a cofactor. In terms of tissue distribution, highly expressed in stems. Expressed at low levels in roots.

It localises to the endoplasmic reticulum membrane. The enzyme catalyses tetrahydroalstonine + A + reduced [NADPH--hemoprotein reductase] + O2 = alstonine + AH2 + oxidized [NADPH--hemoprotein reductase] + 2 H2O + H(+). It carries out the reaction ajmalicine + A + reduced [NADPH--hemoprotein reductase] + O2 = serpentine + AH2 + oxidized [NADPH--hemoprotein reductase] + 2 H2O + H(+). It functions in the pathway alkaloid biosynthesis. Functionally, involved in monoterpene indole alkaloids (MIAs) biosynthesis. Converts by aromatization the tetrahydro-beta-carboline alkaloids tetrahydroalstonine and ajmalicine to the corresponding beta-carboline alkaloids alstonine and serpentine, respectively. The protein is Alstonine synthase of Catharanthus roseus (Madagascar periwinkle).